The chain runs to 588 residues: Histone deacetylase 9 (588 aa).

Residue Ser-22 is modified to Phosphoserine. The interaction with CTBP1 stretch occupies residues 23-27 (PLDLR). Over residues 110–147 (RQEQEVERHRREQQLPPLRGKDRGRERAVASTEVKQKL) the composition is skewed to basic and acidic residues. Disordered regions lie at residues 110-170 (RQEQ…HSVG), 183-242 (TSLD…SSPL), and 264-301 (SSVS…PHPE). An interaction with MEF2 region spans residues 136–154 (RAVASTEVKQKLQEFLLSK). Polar residues-rich tracts occupy residues 154–166 (KSAT…NGKN) and 185–199 (LDQS…SPSY). Residues 175–343 (LWYTAAHHTS…LPAVPSPLNA (169 aa)) form an interaction with MAPK10 region. Basic and acidic residues predominate over residues 208-219 (DSKDDFPLRKTA). Residues 218–261 (TASEPNLKVRSRLKQKVAERRSSPLLRRKDGNLVTSFKKRVFEV) are interaction with ETV6. Ser-220 bears the Phosphoserine mark. Residues 233–242 (KVAERRSSPL) are compositionally biased toward basic and acidic residues. Ser-240 is modified (phosphoserine; by DYRK1B). Residues 264–284 (SSVSSSSPGSGPSSPNNGPAG) are compositionally biased toward low complexity. Ser-450 carries the phosphoserine modification. The segment at 493 to 533 (QLKQPGSHLEEAEEELQGDQSMEDRAASKDNSARSDSSACV) is disordered. Over residues 514 to 525 (MEDRAASKDNSA) the composition is skewed to basic and acidic residues. Position 552 is a phosphoserine (Ser-552).

Belongs to the histone deacetylase family. HD type 2 subfamily. In terms of assembly, homodimer. Interacts with ETV6. Interacts with MEF2, HDAC1, HDAC3, HDAC4, HDAC5, CTBP1 and MAPK10. The phosphorylated form interacts with 14-3-3. Interacts with FOXP3 in the absence of T-cell stimulation. Sumoylated. Post-translationally, phosphorylated on Ser-220 and Ser-450; which promotes 14-3-3-binding, impairs interaction with MEF2, and antagonizes antimyogenic activity. Phosphorylated on Ser-240 by DYRK1B; which impairs nuclear accumulation. Phosphorylated by the PKC kinases PKN1 and PKN2, impairing nuclear import. Expressed at high levels in heart, brain and spleen. Expressed in skeletal muscle.

Its subcellular location is the nucleus. The catalysed reaction is N(6)-acetyl-L-lysyl-[histone] + H2O = L-lysyl-[histone] + acetate. Its function is as follows. Devoided of intrinsic deacetylase activity, promotes the deacetylation of lysine residues on the N-terminal part of the core histones (H2A, H2B, H3 and H4) by recruiting HDAC1 and HDAC3. Histone deacetylation gives a tag for epigenetic repression and plays an important role in transcriptional regulation, cell cycle progression and developmental events. Represses MEF2-dependent transcription, inhibits skeletal myogenesis and may be involved in heart development. Protects neurons from apoptosis, both by inhibiting JUN phosphorylation by MAPK10 and by repressing JUN transcription via HDAC1 recruitment to JUN promoter. This is Histone deacetylase 9 (Hdac9) from Mus musculus (Mouse).